The primary structure comprises 559 residues: Protein NRT1/ PTR FAMILY 2.8 (559 aa).

Transmembrane regions (helical) follow at residues 57 to 77 (GVFL…LTLA), 92 to 112 (LLLG…TAAL), 132 to 152 (KWQL…AGGV), 178 to 198 (FFNW…TGVV), 206 to 226 (WVIG…TFVI), 321 to 341 (LKCV…FILT), 374 to 394 (VSMI…IPIV), 404 to 424 (LTLK…VAGF), 437 to 457 (GSFV…LAGL), 481 to 501 (VAGA…TLLI), and 529 to 549 (YFFI…LFAS).

This sequence belongs to the major facilitator superfamily. Proton-dependent oligopeptide transporter (POT/PTR) (TC 2.A.17) family. As to expression, expressed in flowers.

It is found in the membrane. This Arabidopsis thaliana (Mouse-ear cress) protein is Protein NRT1/ PTR FAMILY 2.8 (NPF2.8).